Here is a 461-residue protein sequence, read N- to C-terminus: Asparagine--tRNA ligase (461 aa).

This sequence belongs to the class-II aminoacyl-tRNA synthetase family. In terms of assembly, homodimer.

The protein resides in the cytoplasm. The catalysed reaction is tRNA(Asn) + L-asparagine + ATP = L-asparaginyl-tRNA(Asn) + AMP + diphosphate + H(+). In Geotalea uraniireducens (strain Rf4) (Geobacter uraniireducens), this protein is Asparagine--tRNA ligase.